Consider the following 79-residue polypeptide: Small ribosomal subunit protein uS17 (79 aa).

It belongs to the universal ribosomal protein uS17 family. As to quaternary structure, part of the 30S ribosomal subunit.

One of the primary rRNA binding proteins, it binds specifically to the 5'-end of 16S ribosomal RNA. The polypeptide is Small ribosomal subunit protein uS17 (Caulobacter sp. (strain K31)).